The following is a 90-amino-acid chain: Small ribosomal subunit protein bS20 (90 aa).

It belongs to the bacterial ribosomal protein bS20 family.

Its function is as follows. Binds directly to 16S ribosomal RNA. The protein is Small ribosomal subunit protein bS20 of Desulfitobacterium hafniense (strain DSM 10664 / DCB-2).